A 109-amino-acid polypeptide reads, in one-letter code: MKKTYRVKSDKDFQMIFSRGKNVANRKFVIYYLEKEQKHFRVGISVSKKLGNAVVRNAIKRKIRHVLLSQKTALQDYDFVVIARKGVEELDYQALEKNLIHVLKIAGLI.

Belongs to the RnpA family. In terms of assembly, consists of a catalytic RNA component (M1 or rnpB) and a protein subunit.

The enzyme catalyses Endonucleolytic cleavage of RNA, removing 5'-extranucleotides from tRNA precursor.. RNaseP catalyzes the removal of the 5'-leader sequence from pre-tRNA to produce the mature 5'-terminus. It can also cleave other RNA substrates such as 4.5S RNA. The protein component plays an auxiliary but essential role in vivo by binding to the 5'-leader sequence and broadening the substrate specificity of the ribozyme. The chain is Ribonuclease P protein component from Streptococcus agalactiae serotype Ia (strain ATCC 27591 / A909 / CDC SS700).